The following is a 424-amino-acid chain: Deoxyguanosinetriphosphate triphosphohydrolase-like protein (424 aa).

Pro residues predominate over residues 1 to 10; it reads MEGTAPPTPY. The segment at 1–31 is disordered; sequence MEGTAPPTPYDPASVARYAPEPDKRPGRTAF. Residues 20-31 are compositionally biased toward basic and acidic residues; it reads PEPDKRPGRTAF. One can recognise an HD domain in the interval 70–220; that stretch reads RLTHSLECAQ…MDWADDVAYS (151 aa).

The protein belongs to the dGTPase family. Type 2 subfamily.

This chain is Deoxyguanosinetriphosphate triphosphohydrolase-like protein, found in Streptomyces coelicolor (strain ATCC BAA-471 / A3(2) / M145).